A 544-amino-acid polypeptide reads, in one-letter code: Prolyl 4-hydroxylase subunit alpha-3 (544 aa).

The first 24 residues, 1 to 24 (MGPGARLAALLVLLKLGVGDPAAA), serve as a signal peptide directing secretion. A TPR repeat occupies 227–260 (EDALDYLAFACYQVGNVSCALSLSREFLVYSPDN). The N-linked (GlcNAc...) asparagine glycan is linked to Asn-242. Residues 422-529 (YAEYLQVVNY…KWVANKWIHE (108 aa)) enclose the Fe2OG dioxygenase domain. Fe cation-binding residues include His-440 and Asp-442. Asn-482 is a glycosylation site (N-linked (GlcNAc...) asparagine). His-510 lines the Fe cation pocket. Lys-520 contacts 2-oxoglutarate.

Belongs to the P4HA family. In terms of assembly, heterotetramer of two alpha-3 chains and two beta chains (the beta chain is the multi-functional PDI). Fe(2+) is required as a cofactor. The cofactor is L-ascorbate. N-glycosylation plays no role in the catalytic activity.

The protein localises to the endoplasmic reticulum lumen. The enzyme catalyses L-prolyl-[collagen] + 2-oxoglutarate + O2 = trans-4-hydroxy-L-prolyl-[collagen] + succinate + CO2. Catalyzes the post-translational formation of 4-hydroxyproline in -Xaa-Pro-Gly- sequences in collagens and other proteins. This Rattus norvegicus (Rat) protein is Prolyl 4-hydroxylase subunit alpha-3 (P4ha3).